Consider the following 339-residue polypeptide: Methionine import ATP-binding protein MetN 2 (339 aa).

Residues 2–241 (ISFNNVSKVY…PKTKTTQNFV (240 aa)) enclose the ABC transporter domain. 38–45 (GFSGAGKS) provides a ligand contact to ATP.

It belongs to the ABC transporter superfamily. Methionine importer (TC 3.A.1.24) family. As to quaternary structure, the complex is composed of two ATP-binding proteins (MetN), two transmembrane proteins (MetI) and a solute-binding protein (MetQ).

It is found in the cell membrane. The catalysed reaction is L-methionine(out) + ATP + H2O = L-methionine(in) + ADP + phosphate + H(+). It catalyses the reaction D-methionine(out) + ATP + H2O = D-methionine(in) + ADP + phosphate + H(+). In terms of biological role, part of the ABC transporter complex MetNIQ involved in methionine import. Responsible for energy coupling to the transport system. The chain is Methionine import ATP-binding protein MetN 2 from Bacillus cereus (strain ATCC 10987 / NRS 248).